Consider the following 429-residue polypeptide: D-amino acid dehydrogenase (429 aa).

An FAD-binding site is contributed by 3–17 (VLILGSGVIGVTSAW).

It belongs to the DadA oxidoreductase family. The cofactor is FAD.

The enzyme catalyses a D-alpha-amino acid + A + H2O = a 2-oxocarboxylate + AH2 + NH4(+). It participates in amino-acid degradation; D-alanine degradation; NH(3) and pyruvate from D-alanine: step 1/1. In terms of biological role, oxidative deamination of D-amino acids. In Xanthomonas euvesicatoria pv. vesicatoria (strain 85-10) (Xanthomonas campestris pv. vesicatoria), this protein is D-amino acid dehydrogenase.